A 434-amino-acid polypeptide reads, in one-letter code: Nuclear distribution protein PAC1 (434 aa).

The 33-residue stretch at 8–40 folds into the LisH domain; the sequence is QKDDLHKAMLDYLYANNHTAAFNALKESAGITY. A coiled-coil region spans residues 57 to 83; sequence TSVIRLQKKIMELENRNAALQEELSMS. 7 WD repeats span residues 106 to 147, 149 to 187, 191 to 230, 233 to 272, 275 to 334, 337 to 378, and 401 to 434; these read GHRA…RTLK, HTKPVNDLDFDHKGHLLVTCSSDLFIKIWDSQNEWKNTK, GHDHAVSAVRFMPGDQLIVSASRDRTIRVFDVASTHQVRT, GHSEWVRCVIPSADGTMLASGSKDQTVRLWDPLTGEPKSE, GHEN…MIRN, GHDN…RIVE, and KKVNGVDSVDAEPEKVVNVVATGSVDETIKIWLP.

This sequence belongs to the WD repeat LIS1/nudF family. In terms of assembly, self-associates. Interacts with NDL1 and dynein.

It is found in the cytoplasm. The protein localises to the cytoskeleton. The protein resides in the spindle pole. Its function is as follows. Positively regulates the activity of the minus-end directed microtubule motor protein dynein. May enhance dynein-mediated microtubule sliding by targeting dynein to the microtubule plus end. Required for nuclear migration during vegetative growth as well as development. Required for retrograde early endosome (EE) transport from the hyphal tip. Required for localization of dynein to the mitotic spindle poles. Recruits additional proteins to the dynein complex at SPBs. The sequence is that of Nuclear distribution protein PAC1 from Coprinopsis cinerea (strain Okayama-7 / 130 / ATCC MYA-4618 / FGSC 9003) (Inky cap fungus).